The following is an 878-amino-acid chain: Probable receptor-like protein kinase At4g39110 (878 aa).

Residues 1–43 (MEIRKKPNIFTVLVIDFSSKPSMALLLAILLFLSGPSASAVAA) form the signal peptide. Residues 44-440 (AAVGPATGFK…GRTTGMGKHG (397 aa)) lie on the Extracellular side of the membrane. 5 N-linked (GlcNAc...) asparagine glycosylation sites follow: N170, N183, N254, N317, and N382. Residues 441 to 461 (MVATAGFVMMFGAFIGLGAMV) form a helical membrane-spanning segment. The Cytoplasmic segment spans residues 462–878 (YKWKKRPQDW…FTQFANLNGR (417 aa)). Residues 526 to 798 (FEASQIIGVG…GDVLWNLEYA (273 aa)) enclose the Protein kinase domain. ATP is bound by residues 532–540 (IGVGGFGNV) and K554. Catalysis depends on D650, which acts as the Proton acceptor. The tract at residues 808–844 (GKAEETENAKPDVVTPGSVPVSDPSPITPSVTTNEAA) is disordered.

The protein belongs to the protein kinase superfamily. Ser/Thr protein kinase family.

It localises to the membrane. The chain is Probable receptor-like protein kinase At4g39110 from Arabidopsis thaliana (Mouse-ear cress).